The chain runs to 130 residues: Small ribosomal subunit protein uS9 (130 aa).

The protein belongs to the universal ribosomal protein uS9 family.

This chain is Small ribosomal subunit protein uS9, found in Variovorax paradoxus (strain S110).